Consider the following 185-residue polypeptide: Ribosome-recycling factor (185 aa).

This sequence belongs to the RRF family.

The protein resides in the cytoplasm. Functionally, responsible for the release of ribosomes from messenger RNA at the termination of protein biosynthesis. May increase the efficiency of translation by recycling ribosomes from one round of translation to another. In Hydrogenovibrio crunogenus (strain DSM 25203 / XCL-2) (Thiomicrospira crunogena), this protein is Ribosome-recycling factor.